A 117-amino-acid polypeptide reads, in one-letter code: Large ribosomal subunit protein uL18 (117 aa).

It belongs to the universal ribosomal protein uL18 family. Part of the 50S ribosomal subunit; part of the 5S rRNA/L5/L18/L25 subcomplex. Contacts the 5S and 23S rRNAs.

Its function is as follows. This is one of the proteins that bind and probably mediate the attachment of the 5S RNA into the large ribosomal subunit, where it forms part of the central protuberance. The chain is Large ribosomal subunit protein uL18 from Methylobacillus flagellatus (strain ATCC 51484 / DSM 6875 / VKM B-1610 / KT).